We begin with the raw amino-acid sequence, 523 residues long: Probable malate:quinone oxidoreductase (523 aa).

Belongs to the MQO family. Requires FAD as cofactor.

It carries out the reaction (S)-malate + a quinone = a quinol + oxaloacetate. It functions in the pathway carbohydrate metabolism; tricarboxylic acid cycle; oxaloacetate from (S)-malate (quinone route): step 1/1. The polypeptide is Probable malate:quinone oxidoreductase (Agrobacterium fabrum (strain C58 / ATCC 33970) (Agrobacterium tumefaciens (strain C58))).